Consider the following 719-residue polypeptide: ATP-dependent RNA helicase SUV3 homolog, mitochondrial (719 aa).

The transit peptide at 1–18 (MRRASGVLRVLGGLTQRC) directs the protein to the mitochondrion. The disordered stretch occupies residues 16–42 (QRCSTSSTPSSSRFPAMNSRRKRNSVR). A Helicase ATP-binding domain is found at 181 to 319 (EARSVTRKIF…PAAIDIVKKL (139 aa)). Residue 194–201 (GPTNSGKT) participates in ATP binding. Residues 343 to 499 (KAIESYSNIE…PTYDQIETFS (157 aa)) form the Helicase C-terminal domain. A disordered region spans residues 662–692 (SKAAGSSKSSEGKRENPSKSEREKPNKRSSI). The segment covering 671–687 (SEGKRENPSKSEREKPN) has biased composition (basic and acidic residues). The stretch at 693–717 (LEALLKRADISEDDLEQLREELNKN) forms a coiled coil.

Belongs to the helicase family. It depends on Mg(2+) as a cofactor. Requires Mn(2+) as cofactor.

It localises to the mitochondrion matrix. Its subcellular location is the nucleus. It catalyses the reaction ATP + H2O = ADP + phosphate + H(+). Its function is as follows. ATPase and DNA/RNA helicase able to unwind DNA/DNA, DNA/RNA and RNA/RNA duplexes in the 5'-3' direction. This Caenorhabditis elegans protein is ATP-dependent RNA helicase SUV3 homolog, mitochondrial.